A 191-amino-acid polypeptide reads, in one-letter code: Cell division protein SepF (191 aa).

Residues 157–178 (YLNESPAQPVQTTTSFGRTATP) show a composition bias toward polar residues. A disordered region spans residues 157–191 (YLNESPAQPVQTTTSFGRTATPTPAWGTDSRYAAQ).

It belongs to the SepF family. As to quaternary structure, homodimer. Interacts with FtsZ.

Its subcellular location is the cytoplasm. In terms of biological role, cell division protein that is part of the divisome complex and is recruited early to the Z-ring. Probably stimulates Z-ring formation, perhaps through the cross-linking of FtsZ protofilaments. Its function overlaps with FtsA. This chain is Cell division protein SepF, found in Synechococcus elongatus (strain ATCC 33912 / PCC 7942 / FACHB-805) (Anacystis nidulans R2).